Here is a 610-residue protein sequence, read N- to C-terminus: Probable pleckstrin homology domain-containing family N member 1 (610 aa).

Residues Met1 to Asp30 form a disordered region. A lipid anchor (N-myristoyl glycine) is attached at Gly2. Residues Thr61–Ser100 are interaction with C1QBP. PH domains are found at residues Val96–Leu192 and Ala227–Asp324. Tyr307 bears the Phosphotyrosine mark. Disordered stretches follow at residues His327–Arg357, Gln371–Leu431, Leu443–Arg473, and Pro493–Ile610. Polar residues-rich tracts occupy residues Gln371 to Thr380 and Asn391 to Gln402. Tyr462 carries the post-translational modification Phosphotyrosine. Residues Val504–Ser526 show a composition bias toward low complexity.

Found in a complex with cytochrome c mRNA and various ribosomal proteins. Interacts with C1QBP, ELAVL1 and BID. Post-translationally, phosphorylation is essential for its mitochondrial localization and regulates its interaction with C1QBP. Testis and adipose tissue (at protein level). Ubiquitous.

The protein resides in the cell membrane. The protein localises to the mitochondrion membrane. Its subcellular location is the mitochondrion. Controls the stability of the leptin mRNA harboring an AU-rich element (ARE) in its 3' UTR, in cooperation with the RNA stabilizer ELAVL1. Decreases the stability of the leptin mRNA by antagonizing the function of ELAVL1 by inducing its atypical recruitment from the nucleus to the cytosol. Binds to cardiolipin (CL), phosphatidic acid (PA), phosphatidylinositol 4-phosphate (PtdIns(4)P) and phosphatidylserine (PS). The chain is Probable pleckstrin homology domain-containing family N member 1 (Plekhn1) from Mus musculus (Mouse).